A 142-amino-acid polypeptide reads, in one-letter code: ATP synthase epsilon chain (142 aa).

This sequence belongs to the ATPase epsilon chain family. F-type ATPases have 2 components, CF(1) - the catalytic core - and CF(0) - the membrane proton channel. CF(1) has five subunits: alpha(3), beta(3), gamma(1), delta(1), epsilon(1). CF(0) has three main subunits: a, b and c.

It localises to the cell inner membrane. Its function is as follows. Produces ATP from ADP in the presence of a proton gradient across the membrane. In Mannheimia succiniciproducens (strain KCTC 0769BP / MBEL55E), this protein is ATP synthase epsilon chain.